The following is a 104-amino-acid chain: ATP-dependent Clp protease adapter protein ClpS (104 aa).

This sequence belongs to the ClpS family. In terms of assembly, binds to the N-terminal domain of the chaperone ClpA.

Its function is as follows. Involved in the modulation of the specificity of the ClpAP-mediated ATP-dependent protein degradation. This chain is ATP-dependent Clp protease adapter protein ClpS, found in Paraburkholderia xenovorans (strain LB400).